A 719-amino-acid chain; its full sequence is BRCA1-A complex subunit RAP80 (719 aa).

The disordered stretch occupies residues 1–30 (MPRRKKKVKEVSESRNLEKKDVETTSSVSV). Residues 1 to 101 (MPRRKKKVKE…SEQEAREVNS (101 aa)) are necessary for transcriptional repression. The span at 9 to 23 (KEVSESRNLEKKDVE) shows a compositional bias: basic and acidic residues. A Glycyl lysine isopeptide (Lys-Gly) (interchain with G-Cter in SUMO2) cross-link involves residue lysine 20. Serine 29 is subject to Phosphoserine. Lysine 31 participates in a covalent cross-link: Glycyl lysine isopeptide (Lys-Gly) (interchain with G-Cter in SUMO2). The disordered stretch occupies residues 43-68 (ISDSDGEEPKEENGLQKTKTKQSNRA). 2 positions are modified to phosphoserine: serine 44 and serine 46. Residues 60–78 (TKTKQSNRAKCLAKRKIAQ) carry the LR motif motif. Glycyl lysine isopeptide (Lys-Gly) (interchain with G-Cter in SUMO2) cross-links involve residues lysine 75 and lysine 90. The UIM 1 domain maps to 80 to 99 (TEEEQFALALKMSEQEAREV). Disordered regions lie at residues 93–152 (EQEA…DSGL) and 164–205 (LFKG…DQSS). The UIM-linker stretch occupies residues 97–103 (REVNSQE). The tract at residues 100-200 (NSQEEEEEEL…EEPVSGSSGS (101 aa)) is necessary for interaction with NR6A1 N-terminus. Serine 101 carries the post-translational modification Phosphoserine. One can recognise a UIM 2 domain in the interval 105 to 124 (EEEELLRKAIAESLNSCRPS). Polar residues predominate over residues 117 to 130 (SLNSCRPSDASATR). Serine 140 is subject to Phosphoserine. A Glycyl lysine isopeptide (Lys-Gly) (interchain with G-Cter in SUMO2) cross-link involves residue lysine 188. Low complexity predominate over residues 195-205 (SGSSGSWDQSS). A Phosphoserine modification is found at serine 205. Residue lysine 245 forms a Glycyl lysine isopeptide (Lys-Gly) (interchain with G-Cter in SUMO2) linkage. Positions 270-400 (TGGTVNYFWG…EEEPTTSHGQ (131 aa)) are AIR. Positions 320 to 378 (FGEPVLPRPPSLIQNECGQGEQASEKNECISEDMGDEDKEERQESRASDWHSKTKDFQE) are disordered. A compositionally biased stretch (acidic residues) spans 349–358 (ISEDMGDEDK). Residues 359–378 (EERQESRASDWHSKTKDFQE) are compositionally biased toward basic and acidic residues. Serine 379 carries the phosphoserine modification. Residues lysine 382 and lysine 387 each participate in a glycyl lysine isopeptide (Lys-Gly) (interchain with G-Cter in SUMO2) cross-link. Positions 391 to 422 (EEEPTTSHGQSSQGIVEETSEEGNSVPASQSV) are disordered. The interval 400-500 (QSSQGIVEET…EVAISTFSSS (101 aa)) is necessary for interaction with NR6A1 C-terminus. Serine 402 and serine 419 each carry phosphoserine. Positions 412–422 (EGNSVPASQSV) are enriched in polar residues. Lysine 428 is covalently cross-linked (Glycyl lysine isopeptide (Lys-Gly) (interchain with G-Cter in SUMO2)). Serine 466 is modified (phosphoserine). The UBZ4-type zinc finger occupies 502–529 (QVSCPLCDQCFPPTKIERHAMYCNGLME). Zn(2+) is bound by residues cysteine 505, cysteine 508, histidine 520, and cysteine 524. A zinc-finger-like region region spans residues 505-582 (CPLCDQCFPP…REYQCHVDSC (78 aa)). Glycyl lysine isopeptide (Lys-Gly) (interchain with G-Cter in SUMO2) cross-links involve residues lysine 544, lysine 559, lysine 562, lysine 587, and lysine 607. The tract at residues 588–668 (ADQGDGPEGS…AGCSREMQSS (81 aa)) is disordered. Over residues 614–623 (NPKEKGHSEG) the composition is skewed to basic and acidic residues. Serine 627 is subject to Phosphoserine. Positions 631-643 (QSEHKTSDADIKS) are enriched in basic and acidic residues. Residues lysine 635 and lysine 642 each participate in a glycyl lysine isopeptide (Lys-Gly) (interchain with G-Cter in SUMO2) cross-link. A phosphoserine mark is found at serine 653 and serine 677. Residues lysine 696 and lysine 697 each participate in a glycyl lysine isopeptide (Lys-Gly) (interchain with G-Cter in SUMO2) cross-link.

This sequence belongs to the RAP80 family. As to quaternary structure, component of the ARISC complex, at least composed of UIMC1/RAP80, ABRAXAS1, BRCC3/BRCC36, BABAM2 and BABAM1/NBA1. Component of the BRCA1-A complex, at least composed of the BRCA1, BARD1, UIMC1/RAP80, ABRAXAS1, BRCC3/BRCC36, BABAM2 and BABAM1/NBA1. In the BRCA1-A complex, interacts directly with ABRAXAS1. Interacts with UBE2I. Interacts with NR6A1. Interacts with ESR1. Interacts with TSP57. Interacts with TRAIP. Post-translationally, sumoylated. In terms of processing, phosphorylated upon DNA damage by ATM or ATR. In terms of tissue distribution, expressed in testis, ovary, thymus and heart. Expressed in germ cells of the testis.

The protein localises to the nucleus. Ubiquitin-binding protein. Specifically recognizes and binds 'Lys-63'-linked ubiquitin. Plays a central role in the BRCA1-A complex by specifically binding 'Lys-63'-linked ubiquitinated histones H2A and H2AX at DNA lesions sites, leading to target the BRCA1-BARD1 heterodimer to sites of DNA damage at double-strand breaks (DSBs). The BRCA1-A complex also possesses deubiquitinase activity that specifically removes 'Lys-63'-linked ubiquitin on histones H2A and H2AX. Also weakly binds monoubiquitin but with much less affinity than 'Lys-63'-linked ubiquitin. May interact with monoubiquitinated histones H2A and H2B; the relevance of such results is however unclear in vivo. Does not bind Lys-48'-linked ubiquitin. May indirectly act as a transcriptional repressor by inhibiting the interaction of NR6A1 with the corepressor NCOR1. The polypeptide is BRCA1-A complex subunit RAP80 (UIMC1) (Homo sapiens (Human)).